A 442-amino-acid polypeptide reads, in one-letter code: tRNA-2-methylthio-N(6)-dimethylallyladenosine synthase (442 aa).

The MTTase N-terminal domain maps to 2–120 (KKVFIRTFGC…LPKMIVDKET (119 aa)). [4Fe-4S] cluster is bound by residues Cys11, Cys49, Cys83, Cys157, Cys161, and Cys164. Residues 143 to 375 (RVEGGAAFVS…NEVIEAETAR (233 aa)) enclose the Radical SAM core domain. A TRAM domain is found at 378–441 (QTMVGTVQRC…TFSLRGKVVE (64 aa)).

The protein belongs to the methylthiotransferase family. MiaB subfamily. In terms of assembly, monomer. It depends on [4Fe-4S] cluster as a cofactor.

Its subcellular location is the cytoplasm. The catalysed reaction is N(6)-dimethylallyladenosine(37) in tRNA + (sulfur carrier)-SH + AH2 + 2 S-adenosyl-L-methionine = 2-methylsulfanyl-N(6)-dimethylallyladenosine(37) in tRNA + (sulfur carrier)-H + 5'-deoxyadenosine + L-methionine + A + S-adenosyl-L-homocysteine + 2 H(+). In terms of biological role, catalyzes the methylthiolation of N6-(dimethylallyl)adenosine (i(6)A), leading to the formation of 2-methylthio-N6-(dimethylallyl)adenosine (ms(2)i(6)A) at position 37 in tRNAs that read codons beginning with uridine. This Neisseria meningitidis serogroup B (strain ATCC BAA-335 / MC58) protein is tRNA-2-methylthio-N(6)-dimethylallyladenosine synthase.